A 593-amino-acid chain; its full sequence is Mitochondrial sodium/calcium exchanger protein (593 aa).

A signal peptide spans 1–20 (MGPLWALRVAGALSVAGVLA). Topologically, residues 21–93 (GHDGSQRAGQ…GAFCTFPSSL (73 aa)) are extracellular. Residue Asn58 is glycosylated (N-linked (GlcNAc...) asparagine). Residues 94–114 (LPLSVSLYALWLLYLFVILGV) form a helical membrane-spanning segment. Topologically, residues 115-135 (TAEKFFCPNLSAISTNLKLSH) are cytoplasmic. The helical transmembrane segment at 136–158 (NGLGVVGHSLTPALHGVTFLAFG) threads the bilayer. Topologically, residues 159–178 (NGAPDIFSAVVAFSDPRTAG) are extracellular. A helical transmembrane segment spans residues 179–199 (LAVGAIFGAGIFVTTVVAGGI). Residues 200–215 (ALVKPFAAASRPFLRD) are Cytoplasmic-facing. Residues 216 to 236 (VIFYMVAVFLTFLVLYFGYIT) form a helical membrane-spanning segment. The Extracellular portion of the chain corresponds to 237 to 239 (LGE). Residues 240–260 (ALGYLGLYVFYVFTVVLCTWI) form a helical membrane-spanning segment. At 261–334 (HRWQRGDGPP…KWRRKPWYWR (74 aa)) the chain is on the cytoplasmic side. The span at 268-277 (GPPPPGPWEP) shows a compositional bias: pro residues. The tract at residues 268 to 291 (GPPPPGPWEPAIPTDAEEQESSGT) is disordered. Residues 335 to 355 (LFKVLKVPVELVLLLTVPVVD) traverse the membrane as a helical segment. At 356-369 (PDKDDLNWKRPLNC) the chain is on the extracellular side. A helical membrane pass occupies residues 370–390 (LHIVTGPLLCIFTLKSGAYGL). The Cytoplasmic portion of the chain corresponds to 391–395 (YQIQG). The chain crosses the membrane as a helical span at residues 396 to 416 (VFPVWALVALAGSVLAIIVFV). Topologically, residues 417-428 (TTHNEEPPKYHC) are extracellular. A helical transmembrane segment spans residues 429–449 (VFAFLGFLSSAMWINAAATEL). Topologically, residues 450-454 (VNILR) are cytoplasmic. A helical transmembrane segment spans residues 455-475 (TLGIIFELSNTVLGLTLLAWG). Residues 476–496 (NSIGDTFSDLTMARQGYPRMA) are Extracellular-facing. A helical transmembrane segment spans residues 497–517 (FSACFGGIIFNILVGVGLGCL). Residues 518-533 (LQMTNSQMVVKLEPDS) are Cytoplasmic-facing. The helical transmembrane segment at 534–554 (LLVWILAGALGLSLVFSFVAV) threads the bilayer. Topologically, residues 555 to 564 (PAQCFQLGKA) are extracellular. Residues 565–585 (YGTCLILYYLVFLCVALLTEF) traverse the membrane as a helical segment. Residues 586-593 (RVIHLAAT) lie on the Cytoplasmic side of the membrane.

This sequence belongs to the Ca(2+):cation antiporter (CaCA) (TC 2.A.19) family. SLC24A subfamily.

Its subcellular location is the mitochondrion inner membrane. The enzyme catalyses Ca(2+)(in) + 3 Na(+)(out) = Ca(2+)(out) + 3 Na(+)(in). Mitochondrial sodium/calcium antiporter that mediates sodium-dependent calcium efflux from mitochondrion, by mediating the exchange of 3 sodium ions per 1 calcium ion. Plays a central role in mitochondrial calcium homeostasis by mediating mitochondrial calcium extrusion: calcium efflux is essential for mitochondrial function and cell survival, notably in cardiomyocytes. Involved in B-lymphocyte chemotaxis. The sequence is that of Mitochondrial sodium/calcium exchanger protein from Gallus gallus (Chicken).